Consider the following 790-residue polypeptide: Mitochondrial intermediate peptidase (790 aa).

A mitochondrion-targeting transit peptide spans 1–29; the sequence is MLKRLARNNSSPWICSRCLQQSQRQRRFN. Zn(2+) is bound at residue His-570. Residue Glu-571 is part of the active site. 2 residues coordinate Zn(2+): His-574 and His-577.

Belongs to the peptidase M3 family. Requires Zn(2+) as cofactor.

The protein localises to the mitochondrion matrix. It carries out the reaction Release of an N-terminal octapeptide as second stage of processing of some proteins imported into the mitochondrion.. In terms of biological role, cleaves proteins, imported into the mitochondrion, to their mature size. While most mitochondrial precursor proteins are processed to the mature form in one step by mitochondrial processing peptidase (MPP), the sequential cleavage by MIP of an octapeptide after initial processing by MPP is a required step for a subgroup of nuclear-encoded precursor proteins destined for the matrix or the inner membrane. The protein is Mitochondrial intermediate peptidase (OCT1) of Phaeosphaeria nodorum (strain SN15 / ATCC MYA-4574 / FGSC 10173) (Glume blotch fungus).